The following is a 174-amino-acid chain: MNPRRKSRLSVVLFILLGISVASALVLYALRQNIDLFYTPTEVVNGKNNESHTKPSIGQRIRIGGMVVEGTVERDPKSLKVRFDLNDIGPSVTVIYEGILPDLFREGQGIVAQGVLIEPTVLNATEVLAKHDENYVPPELEAQMQKIHKPMGISDLKNESDRDRQEKQFKEGNQ.

Residues 1 to 8 (MNPRRKSR) are Cytoplasmic-facing. A helical; Signal-anchor for type II membrane protein transmembrane segment spans residues 9–29 (LSVVLFILLGISVASALVLYA). Over 30–174 (LRQNIDLFYT…QEKQFKEGNQ (145 aa)) the chain is Periplasmic. 2 residues coordinate heme: H131 and Y135. The disordered stretch occupies residues 149-174 (KPMGISDLKNESDRDRQEKQFKEGNQ). The segment covering 156-174 (LKNESDRDRQEKQFKEGNQ) has biased composition (basic and acidic residues).

Belongs to the CcmE/CycJ family.

It is found in the cell inner membrane. In terms of biological role, heme chaperone required for the biogenesis of c-type cytochromes. Transiently binds heme delivered by CcmC and transfers the heme to apo-cytochromes in a process facilitated by CcmF and CcmH. The chain is Cytochrome c-type biogenesis protein CcmE from Histophilus somni (strain 2336) (Haemophilus somnus).